The sequence spans 286 residues: 4-hydroxybenzoate octaprenyltransferase (286 aa).

7 consecutive transmembrane segments (helical) span residues 21–40, 95–115, 142–162, 167–187, 210–230, 235–255, and 266–286; these read GTLL…AGGM, ILFV…NGLV, FLGI…TGEV, WWLF…YAMV, QIIG…GWSA, LYGL…MLIF, and FLNN…DYLI.

The protein belongs to the UbiA prenyltransferase family. It depends on Mg(2+) as a cofactor.

The protein localises to the cell inner membrane. It carries out the reaction all-trans-octaprenyl diphosphate + 4-hydroxybenzoate = 4-hydroxy-3-(all-trans-octaprenyl)benzoate + diphosphate. The protein operates within cofactor biosynthesis; ubiquinone biosynthesis. In terms of biological role, catalyzes the prenylation of para-hydroxybenzoate (PHB) with an all-trans polyprenyl group. Mediates the second step in the final reaction sequence of ubiquinone-8 (UQ-8) biosynthesis, which is the condensation of the polyisoprenoid side chain with PHB, generating the first membrane-bound Q intermediate 3-octaprenyl-4-hydroxybenzoate. This chain is 4-hydroxybenzoate octaprenyltransferase, found in Shewanella baltica (strain OS223).